We begin with the raw amino-acid sequence, 58 residues long: Large ribosomal subunit protein uL30 (58 aa).

Belongs to the universal ribosomal protein uL30 family. In terms of assembly, part of the 50S ribosomal subunit.

The protein is Large ribosomal subunit protein uL30 of Acinetobacter baumannii (strain AB307-0294).